The sequence spans 242 residues: Transcriptional activator protein BjaR1 (242 aa).

The HTH luxR-type domain maps to 173 to 238 (TPYPSTRLTP…HAVALAIRHK (66 aa)). The H-T-H motif DNA-binding region spans 197–216 (AWEIGEILHITQRTAEEHLA).

The protein belongs to the autoinducer-regulated transcriptional regulatory protein family.

Functionally, transcriptional activator that functions in response to the quorum-sensing autoinducer IV-HSL (isovaleryl-homoserine lactone). Activates BjaI expression. Is sensitive to IV-HSL at concentrations as low as 10 pM. This Bradyrhizobium diazoefficiens (strain JCM 10833 / BCRC 13528 / IAM 13628 / NBRC 14792 / USDA 110) protein is Transcriptional activator protein BjaR1 (bjaR1).